The sequence spans 304 residues: MTDVAEEAGWATAKTLAEALPYIQIYDRETVVIKYGGHAMGQEQVAKLFAADAVLLKLLGVHPVVVHGGGPQISRMLDKAGVKSTFVDGLRVTDEATMEVAEMVLSGAINKEIANWITLAGAEADVRGVGLSGKDARMITAEKVTRTRKDPGSNIEQVVDLGFVGEPTKIDPHIIQALLTSETDYIPVIAPIGVSTEGQTFNINADTVAGALAGALKAKRMLMLTDIAGVLDADGNLIRAMTVAEARALIESGVASGGMIPKLENAIHAVENGVEAVVILDGRRPHAMLVELFSEHGAGTLISK.

Residues 69–70 (GG), R91, and N202 contribute to the substrate site.

Belongs to the acetylglutamate kinase family. ArgB subfamily.

Its subcellular location is the cytoplasm. It catalyses the reaction N-acetyl-L-glutamate + ATP = N-acetyl-L-glutamyl 5-phosphate + ADP. It functions in the pathway amino-acid biosynthesis; L-arginine biosynthesis; N(2)-acetyl-L-ornithine from L-glutamate: step 2/4. Its function is as follows. Catalyzes the ATP-dependent phosphorylation of N-acetyl-L-glutamate. This is Acetylglutamate kinase from Caulobacter sp. (strain K31).